The primary structure comprises 79 residues: Putative sulfur carrier protein TM_0983 (79 aa).

C17 serves as the catalytic Cysteine persulfide intermediate.

It belongs to the sulfur carrier protein TusA family.

This is Putative sulfur carrier protein TM_0983 from Thermotoga maritima (strain ATCC 43589 / DSM 3109 / JCM 10099 / NBRC 100826 / MSB8).